A 278-amino-acid polypeptide reads, in one-letter code: Probable ribosomal RNA small subunit methyltransferase A (278 aa).

S-adenosyl-L-methionine contacts are provided by H25, M27, G52, E73, D98, and N114.

Belongs to the class I-like SAM-binding methyltransferase superfamily. rRNA adenine N(6)-methyltransferase family. RsmA subfamily.

Its subcellular location is the cytoplasm. Functionally, specifically dimethylates two adjacent adenosines in the loop of a conserved hairpin near the 3'-end of 16S rRNA in the 30S particle. May play a critical role in biogenesis of 30S subunits. This chain is Probable ribosomal RNA small subunit methyltransferase A, found in Methanopyrus kandleri (strain AV19 / DSM 6324 / JCM 9639 / NBRC 100938).